The sequence spans 162 residues: Putative 4-hydroxy-4-methyl-2-oxoglutarate aldolase (162 aa).

Substrate is bound by residues 75–78 (GDML) and arginine 97. A divalent metal cation is bound at residue aspartate 98.

Belongs to the class II aldolase/RraA-like family. As to quaternary structure, homotrimer. It depends on a divalent metal cation as a cofactor.

The catalysed reaction is 4-hydroxy-4-methyl-2-oxoglutarate = 2 pyruvate. It carries out the reaction oxaloacetate + H(+) = pyruvate + CO2. Catalyzes the aldol cleavage of 4-hydroxy-4-methyl-2-oxoglutarate (HMG) into 2 molecules of pyruvate. Also contains a secondary oxaloacetate (OAA) decarboxylase activity due to the common pyruvate enolate transition state formed following C-C bond cleavage in the retro-aldol and decarboxylation reactions. This chain is Putative 4-hydroxy-4-methyl-2-oxoglutarate aldolase, found in Stutzerimonas stutzeri (strain A1501) (Pseudomonas stutzeri).